The chain runs to 250 residues: 5-oxoprolinase subunit A (250 aa).

Belongs to the LamB/PxpA family. Forms a complex composed of PxpA, PxpB and PxpC.

It carries out the reaction 5-oxo-L-proline + ATP + 2 H2O = L-glutamate + ADP + phosphate + H(+). In terms of biological role, catalyzes the cleavage of 5-oxoproline to form L-glutamate coupled to the hydrolysis of ATP to ADP and inorganic phosphate. The polypeptide is 5-oxoprolinase subunit A (Thermus thermophilus (strain ATCC BAA-163 / DSM 7039 / HB27)).